The sequence spans 86 residues: Omega-theraphotoxin-Hhn1d (86 aa).

Residues 1–21 (MKSIVFVALFGLALLAVVCSA) form the signal peptide. Positions 22–50 (SEDAHKELLKEVVRAMVVDKTDAVQAEER) are excised as a propeptide. Cystine bridges form between Cys52-Cys66, Cys59-Cys71, and Cys65-Cys78.

It belongs to the neurotoxin 10 (Hwtx-1) family. 17 (Hntx-9) subfamily. Expressed by the venom gland.

The protein localises to the secreted. Its function is as follows. Ion channel inhibitor. The chain is Omega-theraphotoxin-Hhn1d from Cyriopagopus hainanus (Chinese bird spider).